A 150-amino-acid polypeptide reads, in one-letter code: Large ribosomal subunit protein bL9 (150 aa).

This sequence belongs to the bacterial ribosomal protein bL9 family.

In terms of biological role, binds to the 23S rRNA. This chain is Large ribosomal subunit protein bL9, found in Shewanella loihica (strain ATCC BAA-1088 / PV-4).